Reading from the N-terminus, the 315-residue chain is MGTKKQKTKKKPSDEILETKRKRLSFLVRMEPRKMVLYPLVVFLVAALILAVHFPEKGIDLKGGVVVTVYHVSASPDELASYVKEKTGIDVRAEEFKDPITGLSGIRIYAPAKTAPSKIADEISNAIRLKYKDADVTPRVVDPTFGKIAQKQGIKAVIYAFIGMAIVVFLFFRDPVPSGTIIFSAFSDMVIALATMGILGIELTTATIAALLMLIGYTVDSNILLTTRLLRRKEDTIEDAYLSAVSTGFTMSTTTLGALFILWLVSTSEVIDSITIVLIFGLLADFMNTWIFNAGVLRWYIASPLKFSIKLRRGK.

Helical transmembrane passes span 35 to 55, 152 to 172, 181 to 201, 205 to 225, 242 to 264, and 282 to 302; these read MVLY…VHFP, QGIK…FLFF, IIFS…ILGI, TATI…NILL, LSAV…ILWL, and LLAD…WYIA.

It belongs to the SecD/SecF family. SecF subfamily. As to quaternary structure, part of the protein translocation apparatus. Forms a complex with SecD.

Its subcellular location is the cell membrane. Involved in protein export. In Thermococcus gammatolerans (strain DSM 15229 / JCM 11827 / EJ3), this protein is Protein-export membrane protein SecF.